Consider the following 162-residue polypeptide: Large ribosomal subunit protein uL10 (162 aa).

The protein belongs to the universal ribosomal protein uL10 family. In terms of assembly, part of the ribosomal stalk of the 50S ribosomal subunit. The N-terminus interacts with L11 and the large rRNA to form the base of the stalk. The C-terminus forms an elongated spine to which L12 dimers bind in a sequential fashion forming a multimeric L10(L12)X complex.

Functionally, forms part of the ribosomal stalk, playing a central role in the interaction of the ribosome with GTP-bound translation factors. The polypeptide is Large ribosomal subunit protein uL10 (Phytoplasma mali (strain AT)).